The sequence spans 141 residues: Protein stum homolog (141 aa).

Phosphoserine is present on S26. Helical transmembrane passes span 51–71 (FPVAVICLFLNTFVPGLGTFV) and 87–107 (RHVCCVFWLNIAAALIQVLTA).

This sequence belongs to the SPEC3 family. Stum subfamily.

It localises to the membrane. This is Protein stum homolog from Mus musculus (Mouse).